The primary structure comprises 203 residues: ATP-dependent Clp protease proteolytic subunit (203 aa).

Ser98 (nucleophile) is an active-site residue. Residue His123 is part of the active site.

This sequence belongs to the peptidase S14 family. In terms of assembly, fourteen ClpP subunits assemble into 2 heptameric rings which stack back to back to give a disk-like structure with a central cavity, resembling the structure of eukaryotic proteasomes.

It is found in the cytoplasm. The catalysed reaction is Hydrolysis of proteins to small peptides in the presence of ATP and magnesium. alpha-casein is the usual test substrate. In the absence of ATP, only oligopeptides shorter than five residues are hydrolyzed (such as succinyl-Leu-Tyr-|-NHMec, and Leu-Tyr-Leu-|-Tyr-Trp, in which cleavage of the -Tyr-|-Leu- and -Tyr-|-Trp bonds also occurs).. Cleaves peptides in various proteins in a process that requires ATP hydrolysis. Has a chymotrypsin-like activity. Plays a major role in the degradation of misfolded proteins. This chain is ATP-dependent Clp protease proteolytic subunit, found in Desulfotalea psychrophila (strain LSv54 / DSM 12343).